The primary structure comprises 168 residues: Xanthine-guanine phosphoribosyltransferase (168 aa).

Residues 43-44 and 102-110 each bind 5-phospho-alpha-D-ribose 1-diphosphate; these read RG and DDLVDTGAT. Residue Asp103 participates in Mg(2+) binding. Residues Asp106 and Ile149 each coordinate guanine. Positions 106 and 149 each coordinate xanthine. Residues 106-110 and 148-149 contribute to the GMP site; these read DTGAT and WI.

Belongs to the purine/pyrimidine phosphoribosyltransferase family. XGPT subfamily. In terms of assembly, homotetramer. The cofactor is Mg(2+).

It localises to the cell inner membrane. The enzyme catalyses GMP + diphosphate = guanine + 5-phospho-alpha-D-ribose 1-diphosphate. The catalysed reaction is XMP + diphosphate = xanthine + 5-phospho-alpha-D-ribose 1-diphosphate. It catalyses the reaction IMP + diphosphate = hypoxanthine + 5-phospho-alpha-D-ribose 1-diphosphate. It participates in purine metabolism; GMP biosynthesis via salvage pathway; GMP from guanine: step 1/1. The protein operates within purine metabolism; XMP biosynthesis via salvage pathway; XMP from xanthine: step 1/1. Purine salvage pathway enzyme that catalyzes the transfer of the ribosyl-5-phosphate group from 5-phospho-alpha-D-ribose 1-diphosphate (PRPP) to the N9 position of the 6-oxopurines guanine and xanthine to form the corresponding ribonucleotides GMP (guanosine 5'-monophosphate) and XMP (xanthosine 5'-monophosphate), with the release of PPi. To a lesser extent, also acts on hypoxanthine. In Nitrobacter winogradskyi (strain ATCC 25391 / DSM 10237 / CIP 104748 / NCIMB 11846 / Nb-255), this protein is Xanthine-guanine phosphoribosyltransferase.